The primary structure comprises 185 residues: Ribosome-recycling factor (185 aa).

Belongs to the RRF family.

It localises to the cytoplasm. Responsible for the release of ribosomes from messenger RNA at the termination of protein biosynthesis. May increase the efficiency of translation by recycling ribosomes from one round of translation to another. The sequence is that of Ribosome-recycling factor from Corynebacterium urealyticum (strain ATCC 43042 / DSM 7109).